The chain runs to 204 residues: Methylthioribulose-1-phosphate dehydratase (204 aa).

Residues His-94 and His-96 each coordinate Zn(2+).

Belongs to the aldolase class II family. MtnB subfamily. The cofactor is Zn(2+).

The enzyme catalyses 5-(methylsulfanyl)-D-ribulose 1-phosphate = 5-methylsulfanyl-2,3-dioxopentyl phosphate + H2O. It functions in the pathway amino-acid biosynthesis; L-methionine biosynthesis via salvage pathway; L-methionine from S-methyl-5-thio-alpha-D-ribose 1-phosphate: step 2/6. Its function is as follows. Catalyzes the dehydration of methylthioribulose-1-phosphate (MTRu-1-P) into 2,3-diketo-5-methylthiopentyl-1-phosphate (DK-MTP-1-P). The protein is Methylthioribulose-1-phosphate dehydratase of Enterobacter sp. (strain 638).